Consider the following 460-residue polypeptide: Bifunctional protein GlmU (460 aa).

A pyrophosphorylase region spans residues 1–232 (MALNVVILAA…AIEVEGANNR (232 aa)). UDP-N-acetyl-alpha-D-glucosamine-binding positions include 8–11 (LAAG), K22, Q73, 78–79 (GT), 100–102 (YGD), G137, E157, N172, and N230. D102 contacts Mg(2+). Position 230 (N230) interacts with Mg(2+). Residues 233 to 253 (VQLAQLERAYQAREAEKLMLA) form a linker region. Positions 254–460 (GANLRDPSRI…GWQRPVKIKK (207 aa)) are N-acetyltransferase. 2 residues coordinate UDP-N-acetyl-alpha-D-glucosamine: R336 and K354. H366 acts as the Proton acceptor in catalysis. UDP-N-acetyl-alpha-D-glucosamine is bound by residues Y369 and N380. Acetyl-CoA contacts are provided by residues A383, 389–390 (NY), S408, A426, and R443.

It in the N-terminal section; belongs to the N-acetylglucosamine-1-phosphate uridyltransferase family. In the C-terminal section; belongs to the transferase hexapeptide repeat family. Homotrimer. Mg(2+) is required as a cofactor.

It localises to the cytoplasm. The catalysed reaction is alpha-D-glucosamine 1-phosphate + acetyl-CoA = N-acetyl-alpha-D-glucosamine 1-phosphate + CoA + H(+). The enzyme catalyses N-acetyl-alpha-D-glucosamine 1-phosphate + UTP + H(+) = UDP-N-acetyl-alpha-D-glucosamine + diphosphate. Its pathway is nucleotide-sugar biosynthesis; UDP-N-acetyl-alpha-D-glucosamine biosynthesis; N-acetyl-alpha-D-glucosamine 1-phosphate from alpha-D-glucosamine 6-phosphate (route II): step 2/2. The protein operates within nucleotide-sugar biosynthesis; UDP-N-acetyl-alpha-D-glucosamine biosynthesis; UDP-N-acetyl-alpha-D-glucosamine from N-acetyl-alpha-D-glucosamine 1-phosphate: step 1/1. It functions in the pathway bacterial outer membrane biogenesis; LPS lipid A biosynthesis. Its function is as follows. Catalyzes the last two sequential reactions in the de novo biosynthetic pathway for UDP-N-acetylglucosamine (UDP-GlcNAc). The C-terminal domain catalyzes the transfer of acetyl group from acetyl coenzyme A to glucosamine-1-phosphate (GlcN-1-P) to produce N-acetylglucosamine-1-phosphate (GlcNAc-1-P), which is converted into UDP-GlcNAc by the transfer of uridine 5-monophosphate (from uridine 5-triphosphate), a reaction catalyzed by the N-terminal domain. In Shewanella baltica (strain OS185), this protein is Bifunctional protein GlmU.